Here is a 139-residue protein sequence, read N- to C-terminus: Transcription antitermination protein NusB (139 aa).

It belongs to the NusB family.

Functionally, involved in transcription antitermination. Required for transcription of ribosomal RNA (rRNA) genes. Binds specifically to the boxA antiterminator sequence of the ribosomal RNA (rrn) operons. The polypeptide is Transcription antitermination protein NusB (Escherichia fergusonii (strain ATCC 35469 / DSM 13698 / CCUG 18766 / IAM 14443 / JCM 21226 / LMG 7866 / NBRC 102419 / NCTC 12128 / CDC 0568-73)).